The chain runs to 874 residues: Valine--tRNA ligase (874 aa).

The tract at residues 1 to 22 (MTENSQQPQPAPSTELPTQYTP) is disordered. A 'HIGH' region motif is present at residues 57 to 67 (PNVTGSLHLGH). The 'KMSKS' region motif lies at 531–535 (KMSKS). ATP is bound at residue Lys534. The stretch at 805 to 871 (VIDFAAERKR…TRITAQLEKL (67 aa)) forms a coiled coil.

Belongs to the class-I aminoacyl-tRNA synthetase family. ValS type 1 subfamily. Monomer.

It is found in the cytoplasm. The catalysed reaction is tRNA(Val) + L-valine + ATP = L-valyl-tRNA(Val) + AMP + diphosphate. Its function is as follows. Catalyzes the attachment of valine to tRNA(Val). As ValRS can inadvertently accommodate and process structurally similar amino acids such as threonine, to avoid such errors, it has a 'posttransfer' editing activity that hydrolyzes mischarged Thr-tRNA(Val) in a tRNA-dependent manner. This Streptomyces coelicolor (strain ATCC BAA-471 / A3(2) / M145) protein is Valine--tRNA ligase.